Consider the following 391-residue polypeptide: 12-oxophytodienoate reductase 3 (391 aa).

An N-acetylmethionine modification is found at Met1. N-acetylthreonine; in 12-oxophytodienoate reductase 3, N-terminally processed is present on Thr2. FMN contacts are provided by residues 31 to 33 (PMT), Gly64, and Gln106. Position 186 (His186) interacts with substrate. The Proton donor role is filled by Tyr191. Arg238 lines the FMN pocket. Arg284 contributes to the substrate binding site. FMN is bound by residues 320–322 (SGG) and 343–344 (GR). The Microbody targeting signal motif lies at 389–391 (SRL).

It belongs to the NADH:flavin oxidoreductase/NADH oxidase family. FMN is required as a cofactor. As to expression, expressed in green seedling, leaves, flowers (anthers, pistil, petal and stamen), and to a lower extent in roots and siliques. Specifically expressed in filament during anther dehiscence initiation.

The protein localises to the peroxisome. The enzyme catalyses (1S,2S)-OPC-8 + NADP(+) = (9S,13S,15Z)-12-oxophyto-10,15-dienoate + NADPH + H(+). Its pathway is lipid metabolism; oxylipin biosynthesis. Functionally, specifically cleaves olefinic bonds in cyclic enones. Involved in the biosynthesis of jasmonic acid (JA) and perhaps in biosynthesis or metabolism of other oxylipin signaling moleclules. Required for the spatial and temporal regulation of JA levels during dehiscence of anthers, promoting the stomium degeneration program. In vitro, reduces 9S,13S-12-oxophytodienoic acid (9S,13S-OPDA) and 9R,13R-OPDA to 9S,13S-OPC-8:0 and 9R,13R-OPC-8:0, respectively. Can detoxify the explosive 2,4,6-trinitrotoluene (TNT) in vitro by catalyzing its nitroreduction to form hydroxylamino-dinitrotoluene (HADNT). This Arabidopsis thaliana (Mouse-ear cress) protein is 12-oxophytodienoate reductase 3.